The primary structure comprises 359 residues: Guanine nucleotide-binding protein subunit alpha-11 (359 aa).

S-palmitoyl cysteine attachment occurs at residues Cys9 and Cys10. In terms of domain architecture, G-alpha spans 38–359 (RELKLLLLGT…QLNLKEYNLV (322 aa)). A G1 motif region spans residues 41-54 (KLLLLGTGESGKST). GTP contacts are provided by residues 46 to 53 (GTGESGKS) and 180 to 183 (LRVR). Residue Ser53 participates in Mg(2+) binding. The tract at residues 178–186 (DVLRVRVPT) is G2 motif. Thr186 contacts Mg(2+). The tract at residues 201–210 (FRMVDVGGQR) is G3 motif. A G4 motif region spans residues 270-277 (ILFLNKKD). Residues 274–277 (NKKD) and Ala331 each bind GTP. Residues 329–334 (TCATDT) are G5 motif.

This sequence belongs to the G-alpha family. G(q) subfamily. G proteins are composed of 3 units; alpha, beta and gamma. The alpha chain contains the guanine nucleotide binding site. Interacts with RGS22. Interacts with NTSR1.

The protein resides in the cell membrane. The protein localises to the cytoplasm. It catalyses the reaction GTP + H2O = GDP + phosphate + H(+). Guanine nucleotide-binding proteins (G proteins) function as transducers downstream of G protein-coupled receptors (GPCRs) in numerous signaling cascades. The alpha chain contains the guanine nucleotide binding site and alternates between an active, GTP-bound state and an inactive, GDP-bound state. Signaling by an activated GPCR promotes GDP release and GTP binding. The alpha subunit has a low GTPase activity that converts bound GTP to GDP, thereby terminating the signal. Both GDP release and GTP hydrolysis are modulated by numerous regulatory proteins. Signaling is mediated via phospholipase C-beta-dependent inositol lipid hydrolysis for signal propagation: activates phospholipase C-beta: following GPCR activation, GNA11 activates PLC-beta (PLCB1, PLCB2, PLCB3 or PLCB4), leading to production of diacylglycerol (DAG) and inositol 1,4,5-trisphosphate (IP3). Transduces FFAR4 signaling in response to long-chain fatty acids (LCFAs). Together with GNAQ, required for heart development. In the respiratory epithelium, transmits OXGR1-dependent signals that lead to downstream intracellular Ca(2+) release and mucocilliary clearance of airborne pathogens. The protein is Guanine nucleotide-binding protein subunit alpha-11 (Gna11) of Rattus norvegicus (Rat).